A 95-amino-acid chain; its full sequence is Aspartyl/glutamyl-tRNA(Asn/Gln) amidotransferase subunit C (95 aa).

Belongs to the GatC family. In terms of assembly, heterotrimer of A, B and C subunits.

It catalyses the reaction L-glutamyl-tRNA(Gln) + L-glutamine + ATP + H2O = L-glutaminyl-tRNA(Gln) + L-glutamate + ADP + phosphate + H(+). The catalysed reaction is L-aspartyl-tRNA(Asn) + L-glutamine + ATP + H2O = L-asparaginyl-tRNA(Asn) + L-glutamate + ADP + phosphate + 2 H(+). In terms of biological role, allows the formation of correctly charged Asn-tRNA(Asn) or Gln-tRNA(Gln) through the transamidation of misacylated Asp-tRNA(Asn) or Glu-tRNA(Gln) in organisms which lack either or both of asparaginyl-tRNA or glutaminyl-tRNA synthetases. The reaction takes place in the presence of glutamine and ATP through an activated phospho-Asp-tRNA(Asn) or phospho-Glu-tRNA(Gln). This chain is Aspartyl/glutamyl-tRNA(Asn/Gln) amidotransferase subunit C, found in Dehalococcoides mccartyi (strain ATCC BAA-2100 / JCM 16839 / KCTC 5957 / BAV1).